Reading from the N-terminus, the 899-residue chain is Origin recognition complex subunit 5 (899 aa).

3 disordered regions span residues 27–47, 100–166, and 194–238; these read FSSP…NDDT, DRIN…EYKD, and KNLE…DGNL. Residues 105–160 show a composition bias toward acidic residues; that stretch reads SEEETNINDDNNDDNNGDYDDDNNSDDDDDNDDNNNNDDNNNDDDEDVDDFEDIKE. Positions 207-218 are enriched in low complexity; sequence SSDNSMTSSSEE. Residues 227–237 are compositionally biased toward basic and acidic residues; it reads ESDKESDKDGN. 303 to 310 is an ATP binding site; sequence GLPGMGKT. The tract at residues 409 to 469 is disordered; it reads KRTTENIRSP…NNNSNNVRFN (61 aa). The span at 455 to 469 shows a compositional bias: low complexity; the sequence is KNNFNNNNSNNVRFN.

The protein belongs to the ORC5 family. As to quaternary structure, component of the origin recognition complex (ORC). Interacts with PCNA1; the interaction occurs during the trophozoite stage but not at the late schizont stage.

The protein resides in the nucleus. The enzyme catalyses ATP + H2O = ADP + phosphate + H(+). Component of the origin recognition complex (ORC) that binds origins of replication. The protein is Origin recognition complex subunit 5 of Plasmodium falciparum (isolate 3D7).